The chain runs to 134 residues: Small ribosomal subunit protein uS11 (134 aa).

Residues 114-134 (TPVPHNGTRPPRKWFKRQEKR) are disordered. Over residues 123-134 (PPRKWFKRQEKR) the composition is skewed to basic residues.

It belongs to the universal ribosomal protein uS11 family. In terms of assembly, part of the 30S ribosomal subunit. Interacts with proteins S7 and S18. Binds to IF-3.

Located on the platform of the 30S subunit, it bridges several disparate RNA helices of the 16S rRNA. Forms part of the Shine-Dalgarno cleft in the 70S ribosome. This Mesomycoplasma hyopneumoniae (strain J / ATCC 25934 / NCTC 10110) (Mycoplasma hyopneumoniae) protein is Small ribosomal subunit protein uS11.